The following is a 213-amino-acid chain: MISNGQSRVKRLIQQLEALGITNKEVLRVISETPRHLFMPESLAHKAYENTALPIGNGQTISQPLMVATMTQLLMQHHCKNVLEIGTGSGYQTAVLAQLVDKVFSVERIATLQYQAKRRMRQLDLHNVAMRHGDGWKGWRSKGPFDGIIVTAAASDIPQDLVDQLADGGVMIIPVGEQHQSQSLVVMRRFGDSLEQQRIGDVRFVPLVKGDVV.

Residue serine 62 is part of the active site.

The protein belongs to the methyltransferase superfamily. L-isoaspartyl/D-aspartyl protein methyltransferase family.

It is found in the cytoplasm. The catalysed reaction is [protein]-L-isoaspartate + S-adenosyl-L-methionine = [protein]-L-isoaspartate alpha-methyl ester + S-adenosyl-L-homocysteine. Functionally, catalyzes the methyl esterification of L-isoaspartyl residues in peptides and proteins that result from spontaneous decomposition of normal L-aspartyl and L-asparaginyl residues. It plays a role in the repair and/or degradation of damaged proteins. In Idiomarina loihiensis (strain ATCC BAA-735 / DSM 15497 / L2-TR), this protein is Protein-L-isoaspartate O-methyltransferase.